Here is a 72-residue protein sequence, read N- to C-terminus: Translation initiation factor IF-1 (72 aa).

The S1-like domain maps to 1–72; that stretch reads MSKEDVIEMQ…TRGRITWRAK (72 aa).

Belongs to the IF-1 family. As to quaternary structure, component of the 30S ribosomal translation pre-initiation complex which assembles on the 30S ribosome in the order IF-2 and IF-3, IF-1 and N-formylmethionyl-tRNA(fMet); mRNA recruitment can occur at any time during PIC assembly.

Its subcellular location is the cytoplasm. One of the essential components for the initiation of protein synthesis. Stabilizes the binding of IF-2 and IF-3 on the 30S subunit to which N-formylmethionyl-tRNA(fMet) subsequently binds. Helps modulate mRNA selection, yielding the 30S pre-initiation complex (PIC). Upon addition of the 50S ribosomal subunit IF-1, IF-2 and IF-3 are released leaving the mature 70S translation initiation complex. This Clostridium acetobutylicum (strain ATCC 824 / DSM 792 / JCM 1419 / IAM 19013 / LMG 5710 / NBRC 13948 / NRRL B-527 / VKM B-1787 / 2291 / W) protein is Translation initiation factor IF-1.